The chain runs to 356 residues: Alpha-N-acetylneuraminide alpha-2,8-sialyltransferase (356 aa).

The Cytoplasmic segment spans residues 1–29 (MSPCGRARRQTSRGAMAVLAWKFPRTRLP). The helical; Signal-anchor for type II membrane protein transmembrane segment at 30–48 (MGASALCVVVLCWLYIFPV) threads the bilayer. Residues 49 to 356 (YRLPNEKEIV…CEDTSLQPTS (308 aa)) are Lumenal-facing. Asn-71 and Asn-119 each carry an N-linked (GlcNAc...) asparagine glycan. 2 disulfides stabilise this stretch: Cys-138/Cys-287 and Cys-152/Cys-347. Asn-143 and Asn-166 together coordinate CMP-N-acetyl-beta-neuraminate. Asn-214 and Asn-245 each carry an N-linked (GlcNAc...) asparagine glycan. CMP-N-acetyl-beta-neuraminate-binding residues include Ser-274, Thr-275, Gly-276, Trp-296, and His-310. His-322 functions as the Proton donor/acceptor in the catalytic mechanism.

This sequence belongs to the glycosyltransferase 29 family. Strongly expressed in melanoma cell lines, adult and fetal brain and to a lesser extent in adult and fetal lung.

The protein localises to the golgi apparatus membrane. The catalysed reaction is an N-acetyl-alpha-neuraminyl-(2-&gt;3)-beta-D-galactosyl derivative + CMP-N-acetyl-beta-neuraminate = an N-acetyl-alpha-neuraminyl-(2-&gt;8)-N-acetyl-alpha-neuraminyl-(2-&gt;3)-beta-D-galactosyl derivative + CMP + H(+). It catalyses the reaction a ganglioside GM3 (d18:1(4E)) + CMP-N-acetyl-beta-neuraminate = a ganglioside GD3 (d18:1(4E)) + CMP + H(+). It carries out the reaction a ganglioside GD3 (d18:1(4E)) + CMP-N-acetyl-beta-neuraminate = a ganglioside GT3 (d18:1(4E)) + CMP + H(+). The enzyme catalyses a ganglioside GD1a (d18:1(4E)) + CMP-N-acetyl-beta-neuraminate = a ganglioside GT1a (d18:1(4E)) + CMP + H(+). The catalysed reaction is a ganglioside GT1b (d18:1(4E)) + CMP-N-acetyl-beta-neuraminate = a ganglioside GQ1b (d18:1(4E)) + CMP + H(+). It catalyses the reaction a ganglioside GM1b (d18:1(4E)) + CMP-N-acetyl-beta-neuraminate = a ganglioside GD1c (d18:1(4E)) + CMP + H(+). It carries out the reaction a ganglioside GD3 + CMP-N-acetyl-beta-neuraminate = a ganglioside GT3 + CMP + H(+). The enzyme catalyses [alpha-N-acetylneuraminyl-(2-&gt;8)](n)-alpha-N-acetylneuraminyl-(2-&gt;8)-alpha-N-acetylneuraminyl-(2-&gt;3)-beta-D-galactosyl-(1-&gt;4)-beta-D-glucosyl-(1&lt;-&gt;1)-ceramide + CMP-N-acetyl-beta-neuraminate = [alpha-N-acetylneuraminyl-(2-&gt;8)](n+1)-alpha-N-acetylneuraminyl-(2-&gt;8)-alpha-N-acetylneuraminyl-(2-&gt;3)-beta-D-galactosyl-(1-&gt;4)-beta-D-glucosyl-(1&lt;-&gt;1)-ceramide + CMP + H(+). It functions in the pathway protein modification; protein glycosylation. It participates in lipid metabolism; sphingolipid metabolism. In terms of biological role, catalyzes the addition of sialic acid in alpha 2,8-linkage to the sialic acid moiety of the ganglioside GM3 to form ganglioside GD3; gangliosides are a subfamily of complex glycosphingolipds that contain one or more residues of sialic acid. Can catalyze the addition of a second alpha-2,8-sialic acid to GD3 to form GT3. Can use GM1b, GD1a and GT1b as acceptor substrates to synthesize GD1c, GT1a and GQ1b respectively. Can synthesize unusual tetra- and pentasialylated lactosylceramide derivatives identified as GQ3 (II3Neu5Ac4-Gg2Cer) and GP3 (II3Neu5Ac5-Gg2Cer) in breast cancer cells. In Homo sapiens (Human), this protein is Alpha-N-acetylneuraminide alpha-2,8-sialyltransferase.